We begin with the raw amino-acid sequence, 800 residues long: Serine/threonine-protein kinase KIN4 (800 aa).

One can recognise a Protein kinase domain in the interval 46–313 (YIIGSTLGEG…LQTIKRHVWL (268 aa)). ATP is bound by residues 52-60 (LGEGEFGKV) and Lys-80. Asp-175 acts as the Proton acceptor in catalysis. Disordered stretches follow at residues 331–397 (LQKE…GSKV) and 438–487 (SARH…TSFT). The span at 348–358 (STYSSSASSYS) shows a compositional bias: low complexity. Ser-365 and Ser-388 each carry phosphoserine. Polar residues-rich tracts occupy residues 380 to 395 (QLAT…STGS) and 459 to 473 (GSPT…PSSK). Ser-521 is modified (phosphoserine). Disordered regions lie at residues 629–661 (EPTN…DKDS) and 678–754 (SLNG…PGRS). Positions 678–721 (SLNGSRSTVESRTSKGNAPPVSSRNPSGQSNRSNIKITQQQPRN) are enriched in polar residues. Positions 727-740 (PNPDKKINDNRIRD) are enriched in basic and acidic residues. Ser-748 carries the phosphoserine modification.

The protein belongs to the protein kinase superfamily. Ser/Thr protein kinase family.

It catalyses the reaction L-seryl-[protein] + ATP = O-phospho-L-seryl-[protein] + ADP + H(+). It carries out the reaction L-threonyl-[protein] + ATP = O-phospho-L-threonyl-[protein] + ADP + H(+). Its function is as follows. This protein is probably a serine/threonine protein kinase. The chain is Serine/threonine-protein kinase KIN4 (KIN4) from Saccharomyces cerevisiae (strain ATCC 204508 / S288c) (Baker's yeast).